A 56-amino-acid polypeptide reads, in one-letter code: Frontoxin I (56 aa).

4 cysteine pairs are disulfide-bonded: Cys3–Cys22, Cys17–Cys39, Cys41–Cys52, and Cys53–Cys56.

Belongs to the three-finger toxin family. Short-chain subfamily. Type I alpha-neurotoxin sub-subfamily. Expressed by the venom gland.

The protein resides in the secreted. In terms of biological role, binds to muscle nicotinic acetylcholine receptor (nAChR) and inhibit acetylcholine from binding to the receptor, thereby impairing neuromuscular transmission. This Micrurus frontalis (Coral snake) protein is Frontoxin I.